The sequence spans 872 residues: Tetratricopeptide repeat protein 16 (872 aa).

The disordered stretch occupies residues 1-20 (MTDSDEDALKVDQGPSQDIP). 8 TPR repeats span residues 61–94 (VREY…DPQL), 96–128 (DFYA…QQDN), 136–169 (TFVL…QPEK), 251–284 (AQQA…NPLD), 285–318 (PSFF…VTED), 331–364 (LLTY…EQQE), 365–398 (KGLY…SPQD), and 406–439 (GLLQ…NPQK). Disordered regions lie at residues 557 to 640 (ATPE…ETET) and 653 to 872 (TAMT…YEVL). Positions 577–590 (KEEEEKEEEEQKEE) are enriched in acidic residues. The segment covering 591-604 (EEQKKEEKKEEKKP) has biased composition (basic and acidic residues). 4 stretches are compositionally biased toward polar residues: residues 610-640 (KVAS…ETET), 653-675 (TAMT…NNRE), 689-709 (GQRQ…NFSK), and 721-754 (KTKA…SQGP). Residues 762–783 (KTTRSPRQRPRKVKAARGRSWR) are compositionally biased toward basic residues. 2 stretches are compositionally biased toward polar residues: residues 799-827 (RSST…GQRT) and 839-861 (GMSS…SKTE).

The protein is Tetratricopeptide repeat protein 16 (TTC16) of Macaca fascicularis (Crab-eating macaque).